The chain runs to 188 residues: Ribosome maturation factor RimP (188 aa).

It belongs to the RimP family.

It localises to the cytoplasm. Required for maturation of 30S ribosomal subunits. The polypeptide is Ribosome maturation factor RimP (Corynebacterium aurimucosum (strain ATCC 700975 / DSM 44827 / CIP 107346 / CN-1) (Corynebacterium nigricans)).